Here is a 441-residue protein sequence, read N- to C-terminus: tRNA-2-methylthio-N(6)-dimethylallyladenosine synthase (441 aa).

Residues 3-119 (KKVSIRTFGC…LPGLIRNAFQ (117 aa)) enclose the MTTase N-terminal domain. [4Fe-4S] cluster-binding residues include cysteine 12, cysteine 48, cysteine 82, cysteine 155, cysteine 159, and cysteine 162. The region spanning 141–371 (RSGSISAFIP…IDLQSGISGE (231 aa)) is the Radical SAM core domain. In terms of domain architecture, TRAM spans 374 to 437 (GNDVGSVQEV…QATLIGRCQD (64 aa)).

The protein belongs to the methylthiotransferase family. MiaB subfamily. As to quaternary structure, monomer. Requires [4Fe-4S] cluster as cofactor.

The protein localises to the cytoplasm. It carries out the reaction N(6)-dimethylallyladenosine(37) in tRNA + (sulfur carrier)-SH + AH2 + 2 S-adenosyl-L-methionine = 2-methylsulfanyl-N(6)-dimethylallyladenosine(37) in tRNA + (sulfur carrier)-H + 5'-deoxyadenosine + L-methionine + A + S-adenosyl-L-homocysteine + 2 H(+). Functionally, catalyzes the methylthiolation of N6-(dimethylallyl)adenosine (i(6)A), leading to the formation of 2-methylthio-N6-(dimethylallyl)adenosine (ms(2)i(6)A) at position 37 in tRNAs that read codons beginning with uridine. This chain is tRNA-2-methylthio-N(6)-dimethylallyladenosine synthase, found in Prosthecochloris aestuarii (strain DSM 271 / SK 413).